Here is a 494-residue protein sequence, read N- to C-terminus: Psoralen synthase (494 aa).

The chain crosses the membrane as a helical span at residues 12–29; the sequence is YFFSLFLVTIFLYKWLTL. C436 is a heme binding site.

The protein belongs to the cytochrome P450 family.

It is found in the endoplasmic reticulum membrane. The protein resides in the microsome membrane. The enzyme catalyses (7S)-marmesin + reduced [NADPH--hemoprotein reductase] + O2 = psoralen + acetone + oxidized [NADPH--hemoprotein reductase] + 2 H2O + H(+). Inhibited by columbianetin. In terms of biological role, involved in linear furanocumarin (psoralen) biosynthesis. Converts marmesin to psoralen. This Ammi majus (Bishop's weed) protein is Psoralen synthase (CYP71AJ1).